Here is a 639-residue protein sequence, read N- to C-terminus: Zinc finger protein ZIC 5 (639 aa).

4 disordered regions span residues 113 to 171, 189 to 251, 323 to 355, and 379 to 409; these read PCGG…GHSR, HGAP…GHPH, PGPHLQHHAPPPAPPPPPAPAQHPHQHHPHLPG, and PDELAGLPPPPPPPPPPPPPPPAGGAKPCSK. Residues 124-150 show a composition bias toward pro residues; that stretch reads SAPPPPAPPLPPTPSPPPPPPPPPPPA. Pro residues-rich tracts occupy residues 331 to 343 and 385 to 401; these read APPPAPPPPPAPA and LPPPPPPPPPPPPPPPA. Residues 434-461 form a C2H2-type 1; atypical zinc finger; sequence HVCFWEDCPREGKPFKAKYKLINHIRVH. 3 C2H2-type zinc fingers span residues 467 to 491, 497 to 521, and 527 to 551; these read FPCPFPGCGKVFARSENLKIHKRTH, FKCEFDGCDRKFANSSDRKKHSHVH, and YYCKIRGCDKSYTHPSSLRKHMKIH. A disordered region spans residues 548 to 568; the sequence is MKIHCKSPPPSPGPLGYSSVG. Residues serine 554, serine 558, and serine 576 each carry the phosphoserine modification. The segment at 607–639 is disordered; the sequence is APSHLHTPSSNGTTSETEDEEIYGNPEVVRTIH. Positions 612-621 are enriched in polar residues; the sequence is HTPSSNGTTS.

Belongs to the GLI C2H2-type zinc-finger protein family.

The protein localises to the nucleus. Functionally, essential for neural crest development, converting cells from an epidermal fate to a neural crest cell fate. Binds to DNA. The protein is Zinc finger protein ZIC 5 (ZIC5) of Homo sapiens (Human).